Consider the following 376-residue polypeptide: Queuine tRNA-ribosyltransferase (376 aa).

D90 serves as the catalytic Proton acceptor. Substrate contacts are provided by residues D90–F94, D144, Q193, and G220. Residues G251 to D257 are RNA binding. Residue D270 is the Nucleophile of the active site. Positions T275 to R279 are RNA binding; important for wobble base 34 recognition. Zn(2+) contacts are provided by C308, C310, C313, and H339.

The protein belongs to the queuine tRNA-ribosyltransferase family. As to quaternary structure, homodimer. Within each dimer, one monomer is responsible for RNA recognition and catalysis, while the other monomer binds to the replacement base PreQ1. Zn(2+) serves as cofactor.

It catalyses the reaction 7-aminomethyl-7-carbaguanine + guanosine(34) in tRNA = 7-aminomethyl-7-carbaguanosine(34) in tRNA + guanine. Its pathway is tRNA modification; tRNA-queuosine biosynthesis. Its function is as follows. Catalyzes the base-exchange of a guanine (G) residue with the queuine precursor 7-aminomethyl-7-deazaguanine (PreQ1) at position 34 (anticodon wobble position) in tRNAs with GU(N) anticodons (tRNA-Asp, -Asn, -His and -Tyr). Catalysis occurs through a double-displacement mechanism. The nucleophile active site attacks the C1' of nucleotide 34 to detach the guanine base from the RNA, forming a covalent enzyme-RNA intermediate. The proton acceptor active site deprotonates the incoming PreQ1, allowing a nucleophilic attack on the C1' of the ribose to form the product. After dissociation, two additional enzymatic reactions on the tRNA convert PreQ1 to queuine (Q), resulting in the hypermodified nucleoside queuosine (7-(((4,5-cis-dihydroxy-2-cyclopenten-1-yl)amino)methyl)-7-deazaguanosine). The chain is Queuine tRNA-ribosyltransferase from Cupriavidus taiwanensis (strain DSM 17343 / BCRC 17206 / CCUG 44338 / CIP 107171 / LMG 19424 / R1) (Ralstonia taiwanensis (strain LMG 19424)).